The chain runs to 372 residues: MESVLKQSRRIVVKVGSSLVTNQGQGLDHSALAHWAGQIVKLKKTGKEVVLVSSGAIAEGMQRLKWKKRPHAVHELQAAAAVGQMGLVQAYETCFRKHELHSAQILLTHEDLSDRKRYLNARSTLATLLDLNVIPIINENDTVATDEIRFGDNDTLAALVTNLIEADVLVILTDQRGLFTADPRKDTQAKLVEQAKAGDADIERMAGGAGSEIGRGGMLTKVLAAKRAARSGAHTVIASGREADVLIRLARGEAIGTQLLAETMTLAARKQWLADHLQIRGNVTLDEGAVEALAVGGKSLLPVGVTDVRGNFERGEVVGCLDPHGREIARGLVNYNAAETRRILRRASDEIESLLGYIGEPELIHRDNLVLL.

Lys-14 contributes to the ATP binding site. Ser-54, Asp-141, and Asn-153 together coordinate substrate. 173–174 (TD) is an ATP binding site. The region spanning 280–358 (RGNVTLDEGA…DEIESLLGYI (79 aa)) is the PUA domain.

It belongs to the glutamate 5-kinase family.

Its subcellular location is the cytoplasm. It catalyses the reaction L-glutamate + ATP = L-glutamyl 5-phosphate + ADP. It functions in the pathway amino-acid biosynthesis; L-proline biosynthesis; L-glutamate 5-semialdehyde from L-glutamate: step 1/2. In terms of biological role, catalyzes the transfer of a phosphate group to glutamate to form L-glutamate 5-phosphate. The polypeptide is Glutamate 5-kinase (Nitrosospira multiformis (strain ATCC 25196 / NCIMB 11849 / C 71)).